The following is a 288-amino-acid chain: Dichloromethane dehalogenase (288 aa).

The GST N-terminal domain maps to 12–94 (KTLRLLYHPA…YVNEKFDGAG (83 aa)). One can recognise a GST C-terminal domain in the interval 100-252 (GTQERAQINQ…ASMFKRKTAV (153 aa)).

This sequence belongs to the GST superfamily. Homohexamer.

It localises to the cytoplasm. The catalysed reaction is dichloromethane + H2O = formaldehyde + 2 chloride + 2 H(+). The protein operates within xenobiotic degradation; dichloromethane degradation. This is Dichloromethane dehalogenase (dcmA) from Methylorubrum extorquens (strain DSM 6343 / CIP 106787 / DM4) (Methylobacterium extorquens).